The chain runs to 193 residues: ATP-dependent Clp protease proteolytic subunit (193 aa).

Catalysis depends on S98, which acts as the Nucleophile. The active site involves H123.

Belongs to the peptidase S14 family. In terms of assembly, fourteen ClpP subunits assemble into 2 heptameric rings which stack back to back to give a disk-like structure with a central cavity, resembling the structure of eukaryotic proteasomes.

Its subcellular location is the cytoplasm. It catalyses the reaction Hydrolysis of proteins to small peptides in the presence of ATP and magnesium. alpha-casein is the usual test substrate. In the absence of ATP, only oligopeptides shorter than five residues are hydrolyzed (such as succinyl-Leu-Tyr-|-NHMec, and Leu-Tyr-Leu-|-Tyr-Trp, in which cleavage of the -Tyr-|-Leu- and -Tyr-|-Trp bonds also occurs).. Cleaves peptides in various proteins in a process that requires ATP hydrolysis. Has a chymotrypsin-like activity. Plays a major role in the degradation of misfolded proteins. The polypeptide is ATP-dependent Clp protease proteolytic subunit (Haemophilus influenzae (strain 86-028NP)).